The sequence spans 335 residues: L-lactate dehydrogenase B chain (335 aa).

NAD(+) is bound by residues 29–57 and R99; that span reads GQVG…VEDK. Substrate is bound by residues R106, N138, and R169. Residue N138 coordinates NAD(+). H193 acts as the Proton acceptor in catalysis. T248 provides a ligand contact to substrate.

This sequence belongs to the LDH/MDH superfamily. LDH family. As to quaternary structure, homotetramer.

It is found in the cytoplasm. It catalyses the reaction (S)-lactate + NAD(+) = pyruvate + NADH + H(+). It functions in the pathway fermentation; pyruvate fermentation to lactate; (S)-lactate from pyruvate: step 1/1. Interconverts simultaneously and stereospecifically pyruvate and lactate with concomitant interconversion of NADH and NAD(+). The chain is L-lactate dehydrogenase B chain (LDHB) from Sceloporus undulatus (Eastern fence lizard).